The chain runs to 204 residues: ATP-dependent Clp protease proteolytic subunit (204 aa).

Serine 102 (nucleophile) is an active-site residue. Histidine 127 is a catalytic residue.

Belongs to the peptidase S14 family. Fourteen ClpP subunits assemble into 2 heptameric rings which stack back to back to give a disk-like structure with a central cavity, resembling the structure of eukaryotic proteasomes.

It localises to the cytoplasm. The catalysed reaction is Hydrolysis of proteins to small peptides in the presence of ATP and magnesium. alpha-casein is the usual test substrate. In the absence of ATP, only oligopeptides shorter than five residues are hydrolyzed (such as succinyl-Leu-Tyr-|-NHMec, and Leu-Tyr-Leu-|-Tyr-Trp, in which cleavage of the -Tyr-|-Leu- and -Tyr-|-Trp bonds also occurs).. Its function is as follows. Cleaves peptides in various proteins in a process that requires ATP hydrolysis. Has a chymotrypsin-like activity. Plays a major role in the degradation of misfolded proteins. This is ATP-dependent Clp protease proteolytic subunit from Neisseria meningitidis serogroup A / serotype 4A (strain DSM 15465 / Z2491).